Reading from the N-terminus, the 688-residue chain is MRLHLHRFISTSTPLRSGQNLTEKIVQKYAVNLPPNKLVHTGDYVTIKPAHCMSHDNSWPVATKFMGLGAKRVKDNRQIVCTLDHDVQNKTEKNLAKYANIERFAKEQGIDFYPAGRGIGHQIMIEEGYAFPLNLTVASDSHSNTYGGVGSLGTPIVRTDAASIWATVQTWWQIPPVAKVELKGNLQNGVTGKDIIVALCGVFNNDEVLNHAIEFVGDGVENLPIDYRLTIANMTTEWGALSGLFPIDDKLIEFYEGRLQKLGPNHPRINKDTIEALRRGSLASDEDAKYAKHLVIDLNTLSPYVSGPNSVKVSNPLSKLSQDNIAINKAYLVSCTNSRLSDIQAAADVLKGHKVHPNVEFYVAAASSLVQQDAEAAGAWQTIIDAGAKPLPAGCGPCIGLGTGLLKDGEVGISATNRNFKGRMGSKDALAYLASPEVVAASAVLGKIGAPEEIDGKPVNASPEIVKSIDLPKSSGNTGATSEEPISEDDTSEASVEVLPGFPKSIQGELILCNADNINTDGIYPGKYTYQDDISREQMAEVCMENYDPEFKTKTKSDDIIISGYNFGTGSSREQAATCILARGMKLVVAGSFGNIFSRNSINNALLTLEIPELIEKLRVKYDGVNELTIRTGWFLKWDVTKALVTVADLDGEVILQQKVGELGTNLQDIIVKGGLEGWVKSELQKEQ.

[4Fe-4S] cluster contacts are provided by Cys335, Cys395, and Cys398. Positions 468–494 (SIDLPKSSGNTGATSEEPISEDDTSEA) are disordered.

It belongs to the aconitase/IPM isomerase family. It depends on [4Fe-4S] cluster as a cofactor.

It is found in the mitochondrion. It catalyses the reaction (2R,3S)-homoisocitrate = cis-homoaconitate + H2O. Its pathway is amino-acid biosynthesis; L-lysine biosynthesis via AAA pathway; L-alpha-aminoadipate from 2-oxoglutarate: step 3/5. Functionally, catalyzes the reversible hydration of cis-homoaconitate to (2R,3S)-homoisocitrate, a step in the alpha-aminoadipate pathway for lysine biosynthesis. This Candida parapsilosis (Yeast) protein is Homoaconitase, mitochondrial (LYS4).